A 1370-amino-acid polypeptide reads, in one-letter code: DNA-directed RNA polymerase subunit beta (1370 aa).

It belongs to the RNA polymerase beta chain family. The RNAP catalytic core consists of 2 alpha, 1 beta, 1 beta' and 1 omega subunit. When a sigma factor is associated with the core the holoenzyme is formed, which can initiate transcription.

It catalyses the reaction RNA(n) + a ribonucleoside 5'-triphosphate = RNA(n+1) + diphosphate. In terms of biological role, DNA-dependent RNA polymerase catalyzes the transcription of DNA into RNA using the four ribonucleoside triphosphates as substrates. This chain is DNA-directed RNA polymerase subunit beta, found in Geobacter metallireducens (strain ATCC 53774 / DSM 7210 / GS-15).